We begin with the raw amino-acid sequence, 924 residues long: Protein SMAX1-LIKE 2 (924 aa).

In terms of domain architecture, Clp R spans 8-181 (IQQTLTPEAA…SAIEQSLIGN (174 aa)). The repeat 1 stretch occupies residues 12–83 (LTPEAATVLN…LCFSVALERL (72 aa)). Residues 86 to 105 (TSTTTTTTSSSSSSSPSQTQ) show a composition bias toward low complexity. A disordered region spans residues 86-107 (TSTTTTTTSSSSSSSPSQTQEP). The repeat 2 stretch occupies residues 109–181 (LSNALTAALK…SAIEQSLIGN (73 aa)). The interval 522–552 (TRSDITPPGSPVGTDLVLGRPNRGLSSPEKK) is disordered. The EAR signature appears at 780–784 (FDLNE).

Belongs to the ClpA/ClpB family. Interacts probably with TPL/TPR in an EAR-motif dependent manner. Expressed in seedlings and leaves. Detected in roots and axillary branches.

Its function is as follows. Probable component of a transcriptional corepressor complex that acts specifically in the karrikin pathway. Controls seedling growth redundantly with SMAX1, but is not involved in leaf morphology, shoot branching or germination control. The polypeptide is Protein SMAX1-LIKE 2 (Arabidopsis thaliana (Mouse-ear cress)).